The primary structure comprises 262 residues: DNA-directed RNA polymerase subunit Rpo3 (262 aa).

The protein belongs to the archaeal Rpo3/eukaryotic RPB3 RNA polymerase subunit family. As to quaternary structure, part of the RNA polymerase complex.

It is found in the cytoplasm. The catalysed reaction is RNA(n) + a ribonucleoside 5'-triphosphate = RNA(n+1) + diphosphate. Functionally, DNA-dependent RNA polymerase (RNAP) catalyzes the transcription of DNA into RNA using the four ribonucleoside triphosphates as substrates. The protein is DNA-directed RNA polymerase subunit Rpo3 of Pyrobaculum neutrophilum (strain DSM 2338 / JCM 9278 / NBRC 100436 / V24Sta) (Thermoproteus neutrophilus).